Consider the following 124-residue polypeptide: MRPHHFFCGNMGVMYTAMSGYETEDAQAYWACGRAYESAFATLTKKVPGTTFSADMPTSTWHGVLDCGYSSSINVAENKSSPIDYWNCGRTYARNYALSDALSLKPTNMLQYFLLVLFFICIIL.

This is an uncharacterized protein from Saccharomyces cerevisiae (strain ATCC 204508 / S288c) (Baker's yeast).